Here is a 219-residue protein sequence, read N- to C-terminus: PKHD-type hydroxylase Mmar10_1675 (219 aa).

The 95-residue stretch at 77-171 (TLSRILVSRY…RVAVVGWVRS (95 aa)) folds into the Fe2OG dioxygenase domain. Fe cation-binding residues include histidine 95, aspartate 97, and histidine 152. Arginine 162 lines the 2-oxoglutarate pocket.

The cofactor is Fe(2+). L-ascorbate is required as a cofactor.

The chain is PKHD-type hydroxylase Mmar10_1675 from Maricaulis maris (strain MCS10) (Caulobacter maris).